The following is a 282-amino-acid chain: tRNA uridine(34) hydroxylase (282 aa).

Residues 128-222 (EGRPVVMLDT…YFEEVGGSHY (95 aa)) form the Rhodanese domain. Cys-182 functions as the Cysteine persulfide intermediate in the catalytic mechanism.

It belongs to the TrhO family.

The enzyme catalyses uridine(34) in tRNA + AH2 + O2 = 5-hydroxyuridine(34) in tRNA + A + H2O. Its function is as follows. Catalyzes oxygen-dependent 5-hydroxyuridine (ho5U) modification at position 34 in tRNAs. This Cupriavidus necator (strain ATCC 17699 / DSM 428 / KCTC 22496 / NCIMB 10442 / H16 / Stanier 337) (Ralstonia eutropha) protein is tRNA uridine(34) hydroxylase.